Reading from the N-terminus, the 782-residue chain is Endonuclease MutS2 (782 aa).

336 to 343 (GPNTGGKT) contributes to the ATP binding site. One can recognise a Smr domain in the interval 707–782 (LDLRGYRYED…GFGVTVATLK (76 aa)).

Belongs to the DNA mismatch repair MutS family. MutS2 subfamily. Homodimer. Binds to stalled ribosomes, contacting rRNA.

In terms of biological role, endonuclease that is involved in the suppression of homologous recombination and thus may have a key role in the control of bacterial genetic diversity. Acts as a ribosome collision sensor, splitting the ribosome into its 2 subunits. Detects stalled/collided 70S ribosomes which it binds and splits by an ATP-hydrolysis driven conformational change. Acts upstream of the ribosome quality control system (RQC), a ribosome-associated complex that mediates the extraction of incompletely synthesized nascent chains from stalled ribosomes and their subsequent degradation. Probably generates substrates for RQC. The chain is Endonuclease MutS2 from Staphylococcus aureus (strain bovine RF122 / ET3-1).